The following is a 246-amino-acid chain: 23S rRNA (guanosine-2'-O-)-methyltransferase RlmB (246 aa).

S-adenosyl-L-methionine contacts are provided by Gly198, Ile218, and Leu227.

The protein belongs to the class IV-like SAM-binding methyltransferase superfamily. RNA methyltransferase TrmH family. RlmB subfamily.

It is found in the cytoplasm. It carries out the reaction guanosine(2251) in 23S rRNA + S-adenosyl-L-methionine = 2'-O-methylguanosine(2251) in 23S rRNA + S-adenosyl-L-homocysteine + H(+). In terms of biological role, specifically methylates the ribose of guanosine 2251 in 23S rRNA. The protein is 23S rRNA (guanosine-2'-O-)-methyltransferase RlmB of Shewanella oneidensis (strain ATCC 700550 / JCM 31522 / CIP 106686 / LMG 19005 / NCIMB 14063 / MR-1).